Consider the following 578-residue polypeptide: Lipoprotein A (578 aa).

Residues 1–27 (MNKKYFKKYSWVLILSTSILAPMTLAS) form the signal peptide. A lipid anchor (N-palmitoyl cysteine) is attached at Cys28. Cys28 carries S-diacylglycerol cysteine lipidation. 2 disordered regions span residues 35 to 135 (KEDK…NTSA) and 172 to 203 (AKDD…EVKD). Over residues 41-50 (NDSSNLSNKT) the composition is skewed to polar residues. Residues 51–74 (NKSDPNDHLKDKDKNVSQDNKDST) are compositionally biased toward basic and acidic residues. A compositionally biased stretch (polar residues) spans 75 to 96 (NKAVSNENSQTQSQKTNESSQN). Residues 108-119 (ITNQNSSSNTKS) are compositionally biased toward low complexity. A compositionally biased stretch (basic and acidic residues) spans 172–181 (AKDDSKEKSK).

It belongs to the M.pulmonis LipAB lipoprotein family.

It localises to the cell membrane. The polypeptide is Lipoprotein A (lipA) (Mycoplasmopsis pulmonis (strain UAB CTIP) (Mycoplasma pulmonis)).